A 105-amino-acid chain; its full sequence is Co-chaperonin GroES (105 aa).

The protein belongs to the GroES chaperonin family. As to quaternary structure, heptamer of 7 subunits arranged in a ring. Interacts with the chaperonin GroEL.

The protein localises to the cytoplasm. Functionally, together with the chaperonin GroEL, plays an essential role in assisting protein folding. The GroEL-GroES system forms a nano-cage that allows encapsulation of the non-native substrate proteins and provides a physical environment optimized to promote and accelerate protein folding. GroES binds to the apical surface of the GroEL ring, thereby capping the opening of the GroEL channel. The protein is Co-chaperonin GroES of Parvibaculum lavamentivorans (strain DS-1 / DSM 13023 / NCIMB 13966).